A 67-amino-acid polypeptide reads, in one-letter code: DNA-directed RNA polymerase subunit omega (67 aa).

This sequence belongs to the RNA polymerase subunit omega family. In terms of assembly, the RNAP catalytic core consists of 2 alpha, 1 beta, 1 beta' and 1 omega subunit. When a sigma factor is associated with the core the holoenzyme is formed, which can initiate transcription.

It carries out the reaction RNA(n) + a ribonucleoside 5'-triphosphate = RNA(n+1) + diphosphate. Functionally, promotes RNA polymerase assembly. Latches the N- and C-terminal regions of the beta' subunit thereby facilitating its interaction with the beta and alpha subunits. The protein is DNA-directed RNA polymerase subunit omega of Leptothrix cholodnii (strain ATCC 51168 / LMG 8142 / SP-6) (Leptothrix discophora (strain SP-6)).